The primary structure comprises 833 residues: Patatin-like phospholipase domain-containing protein SNOG_00918 (833 aa).

2 disordered regions span residues methionine 1–aspartate 20 and histidine 49–asparagine 71. The chain crosses the membrane as a helical span at residues tryptophan 108 to threonine 128. The region spanning leucine 301 to asparagine 457 is the PNPLA domain. Positions glycine 332–glycine 336 match the GXSXG motif. Catalysis depends on serine 334, which acts as the Nucleophile. Residue aspartate 444 is the Proton acceptor of the active site. 2 disordered regions span residues threonine 630–proline 657 and leucine 680–leucine 833. A compositionally biased stretch (low complexity) spans serine 644–serine 655. Polar residues predominate over residues aspartate 689–lysine 707. Basic and acidic residues-rich tracts occupy residues arginine 740–alanine 750, arginine 759–arginine 769, and aspartate 782–valine 794. Residues glutamate 809–glutamate 819 are compositionally biased toward acidic residues.

It belongs to the PLPL family.

Its subcellular location is the membrane. Probable lipid hydrolase. The protein is Patatin-like phospholipase domain-containing protein SNOG_00918 of Phaeosphaeria nodorum (strain SN15 / ATCC MYA-4574 / FGSC 10173) (Glume blotch fungus).